The chain runs to 468 residues: Sulfate adenylyltransferase subunit 1 (468 aa).

A tr-type G domain is found at 22–239 (KELLRFLTCG…TVEIASDKNA (218 aa)). The interval 31 to 38 (GSVDDGKS) is G1. Position 31–38 (31–38 (GSVDDGKS)) interacts with GTP. The tract at residues 89–93 (GITID) is G2. Positions 110 to 113 (DTPG) are G3. Residues 110 to 114 (DTPGH) and 165 to 168 (NKMD) each bind GTP. The segment at 165 to 168 (NKMD) is G4. The segment at 202–204 (SAL) is G5.

It belongs to the TRAFAC class translation factor GTPase superfamily. Classic translation factor GTPase family. CysN/NodQ subfamily. As to quaternary structure, heterodimer composed of CysD, the smaller subunit, and CysN.

It carries out the reaction sulfate + ATP + H(+) = adenosine 5'-phosphosulfate + diphosphate. Its pathway is sulfur metabolism; hydrogen sulfide biosynthesis; sulfite from sulfate: step 1/3. Its function is as follows. With CysD forms the ATP sulfurylase (ATPS) that catalyzes the adenylation of sulfate producing adenosine 5'-phosphosulfate (APS) and diphosphate, the first enzymatic step in sulfur assimilation pathway. APS synthesis involves the formation of a high-energy phosphoric-sulfuric acid anhydride bond driven by GTP hydrolysis by CysN coupled to ATP hydrolysis by CysD. The protein is Sulfate adenylyltransferase subunit 1 of Teredinibacter turnerae (strain ATCC 39867 / T7901).